A 207-amino-acid polypeptide reads, in one-letter code: Ribosomal RNA small subunit methyltransferase G (207 aa).

S-adenosyl-L-methionine contacts are provided by residues glycine 77, phenylalanine 82, 100 to 102 (ERS), and arginine 141.

This sequence belongs to the methyltransferase superfamily. RNA methyltransferase RsmG family.

Its subcellular location is the cytoplasm. Functionally, specifically methylates the N7 position of a guanine in 16S rRNA. This Borrelia turicatae (strain 91E135) protein is Ribosomal RNA small subunit methyltransferase G.